Reading from the N-terminus, the 122-residue chain is Large ribosomal subunit protein uL14 (122 aa).

This sequence belongs to the universal ribosomal protein uL14 family. Part of the 50S ribosomal subunit. Forms a cluster with proteins L3 and L19. In the 70S ribosome, L14 and L19 interact and together make contacts with the 16S rRNA in bridges B5 and B8.

In terms of biological role, binds to 23S rRNA. Forms part of two intersubunit bridges in the 70S ribosome. This is Large ribosomal subunit protein uL14 from Cereibacter sphaeroides (strain ATCC 17029 / ATH 2.4.9) (Rhodobacter sphaeroides).